The chain runs to 385 residues: Protein pelota homolog (385 aa).

Lys-162 is covalently cross-linked (Glycyl lysine isopeptide (Lys-Gly) (interchain with G-Cter in SUMO2)). Phosphoserine is present on residues Ser-374, Ser-380, Ser-381, and Ser-382.

It belongs to the eukaryotic release factor 1 family. Pelota subfamily. Component of the Pelota-HBS1L complex, also named Dom34-Hbs1 complex, composed of PELO and HBS1L. Interacts with PINK1. Interacts with ABCE1. Interacts with CNOT4. The cofactor is a divalent metal cation. Ubiquitously expressed.

The protein localises to the cytoplasm. Component of the Pelota-HBS1L complex, a complex that recognizes stalled ribosomes and triggers the No-Go Decay (NGD) pathway. In the Pelota-HBS1L complex, PELO recognizes ribosomes stalled at the 3' end of an mRNA and engages stalled ribosomes by destabilizing mRNA in the mRNA channel. Following mRNA extraction from stalled ribosomes by the SKI complex, the Pelota-HBS1L complex promotes recruitment of ABCE1, which drives the disassembly of stalled ribosomes, followed by degradation of damaged mRNAs as part of the NGD pathway. As part of the PINK1-regulated signaling, upon mitochondrial damage is recruited to the ribosome/mRNA-ribonucleoprotein complex associated to mitochondrial outer membrane thereby enabling the recruitment of autophagy receptors and induction of mitophagy. This is Protein pelota homolog from Mus musculus (Mouse).